Here is a 656-residue protein sequence, read N- to C-terminus: uncharacterized protein (656 aa).

Disordered regions lie at residues 1-41 and 60-88; these read MMAT…ESEG and SNKV…HNLE. The span at 22–36 shows a compositional bias: low complexity; sequence SDSSDSGSDVSFFSV. Ser39 is subject to Phosphoserine. Residues 62-78 show a composition bias toward basic and acidic residues; the sequence is KVEKDSDSEQRGRKKET.

The protein resides in the cytoplasm. It is found in the mitochondrion. This is an uncharacterized protein from Saccharomyces cerevisiae (strain ATCC 204508 / S288c) (Baker's yeast).